Reading from the N-terminus, the 512-residue chain is Vacuolar protein sorting-associated protein 30 (512 aa).

The BARA stretch occupies residues 294 to 511 (TNIYNESFRI…LVFCSSKLSL (218 aa)).

It belongs to the beclin family. As to quaternary structure, component of the autophagy-specific VPS34 PI3-kinase complex I composed of VPS15, VPS30, VPS34, ATG14 and ATG38; and of the VPS34 PI3-kinase complex II composed of VPS15, VPS30, VPS34 and VPS38.

The protein resides in the endosome membrane. It is found in the vacuole membrane. Its subcellular location is the preautophagosomal structure membrane. Functionally, required for cytoplasm to vacuole transport (Cvt), autophagy, nucleophagy, and mitophagy, as a part of the autophagy-specific VPS34 PI3-kinase complex I. This complex is essential to recruit the ATG8-phosphatidylinositol conjugate and the ATG12-ATG5 conjugate to the pre-autophagosomal structure. Also involved in endosome-to-Golgi retrograde transport as part of the VPS34 PI3-kinase complex II. This second complex is required for the endosome-to-Golgi retrieval of PEP1 and KEX2, and the recruitment of VPS5 and VPS7, two components of the retromer complex, to endosomal membranes (probably through the synthesis of a specific pool of phosphatidylinositol 3-phosphate recruiting the retromer to the endosomes). Required for survival and/or proliferation in kidneys but not brain. The protein is Vacuolar protein sorting-associated protein 30 of Candida glabrata (strain ATCC 2001 / BCRC 20586 / JCM 3761 / NBRC 0622 / NRRL Y-65 / CBS 138) (Yeast).